A 256-amino-acid chain; its full sequence is uncharacterized protein (256 aa).

Residues 1–23 are disordered; sequence MIPPCENAPHIIYHESQRGTRDR. Residues 12–23 show a composition bias toward basic and acidic residues; it reads IYHESQRGTRDR.

This is an uncharacterized protein from Homo sapiens (Human).